The following is a 208-amino-acid chain: Large ribosomal subunit protein uL4 (208 aa).

The interval 45–95 (RQGTHKAKTRSEVRGGGKKPFRQKGTGNARQGSSRSPIHVGGGTIFGPQPH) is disordered. The span at 69-80 (GTGNARQGSSRS) shows a compositional bias: polar residues.

Belongs to the universal ribosomal protein uL4 family. Part of the 50S ribosomal subunit.

Its function is as follows. One of the primary rRNA binding proteins, this protein initially binds near the 5'-end of the 23S rRNA. It is important during the early stages of 50S assembly. It makes multiple contacts with different domains of the 23S rRNA in the assembled 50S subunit and ribosome. In terms of biological role, forms part of the polypeptide exit tunnel. In Chlorobium chlorochromatii (strain CaD3), this protein is Large ribosomal subunit protein uL4.